Reading from the N-terminus, the 349-residue chain is Probable trehalose-phosphate phosphatase H (349 aa).

The protein belongs to the trehalose phosphatase family. A divalent metal cation is required as a cofactor.

The catalysed reaction is alpha,alpha-trehalose 6-phosphate + H2O = alpha,alpha-trehalose + phosphate. Its pathway is glycan biosynthesis; trehalose biosynthesis. Functionally, removes the phosphate from trehalose 6-phosphate to produce free trehalose. Trehalose accumulation in plant may improve abiotic stress tolerance. The sequence is that of Probable trehalose-phosphate phosphatase H (TPPH) from Arabidopsis thaliana (Mouse-ear cress).